We begin with the raw amino-acid sequence, 197 residues long: Holliday junction branch migration complex subunit RuvA (197 aa).

Residues 1-64 form a domain I region; it reads MIARLAGKVA…QDAIELYGFA (64 aa). Residues 65–141 are domain II; the sequence is SEDEEAVFRA…LALLARAAGP (77 aa). Residues 141–145 are flexible linker; the sequence is PARAK. Positions 146-197 are domain III; sequence PGAGVVEQLRQALVNLGYKPPQADAAADALRDEAEGKKLDELLREALKRLRG.

It belongs to the RuvA family. In terms of assembly, homotetramer. Forms an RuvA(8)-RuvB(12)-Holliday junction (HJ) complex. HJ DNA is sandwiched between 2 RuvA tetramers; dsDNA enters through RuvA and exits via RuvB. An RuvB hexamer assembles on each DNA strand where it exits the tetramer. Each RuvB hexamer is contacted by two RuvA subunits (via domain III) on 2 adjacent RuvB subunits; this complex drives branch migration. In the full resolvosome a probable DNA-RuvA(4)-RuvB(12)-RuvC(2) complex forms which resolves the HJ.

It localises to the cytoplasm. Its function is as follows. The RuvA-RuvB-RuvC complex processes Holliday junction (HJ) DNA during genetic recombination and DNA repair, while the RuvA-RuvB complex plays an important role in the rescue of blocked DNA replication forks via replication fork reversal (RFR). RuvA specifically binds to HJ cruciform DNA, conferring on it an open structure. The RuvB hexamer acts as an ATP-dependent pump, pulling dsDNA into and through the RuvAB complex. HJ branch migration allows RuvC to scan DNA until it finds its consensus sequence, where it cleaves and resolves the cruciform DNA. In Anaeromyxobacter sp. (strain Fw109-5), this protein is Holliday junction branch migration complex subunit RuvA.